A 677-amino-acid chain; its full sequence is MHHLLEQSADMATALLAGEKLRELILPGAQDDKAGALAALLLQLKLELPFDRVVTIGTVLVPILLVTLVFTKNFAEEPIYCYTPHNFTRDQALYARGYCWTELRDALPGVDASLWPSLFEHKFLPYALLAFAAIMYVPALGWEFLASTRLTSELNFLLQEIDNCYHRAAEGRAPKIEKQIQSKGPGITEREKREIIENAEKEKSPEQNLFEKYLERRGRSNFLAKLYLARHVLILLLSAVPISYLCTYYATQKQNEFTCALGASPDGAAGAGPAVRVSCKLPSVQLQRIIAGVDIVLLCVMNLIILVNLIHLFIFRKSNFIFDKLHKVGIKTRRQWRRSQFCDINILAMFCNENRDHIKSLNRLDFITNESDLMYDNVVRQLLAALAQSNHDATPTVRDSGVQTVDPSANPAEPDGAAEPPVVKRPRKKMKWIPTSNPLPQPFKEPLAIMRVENSKAEKPKPARRKTATDTLIAPLLDRSAHHYKGGGGDPGPGPAPAPAPPPAPDKKHARHFSLDVHPYILGTKKAKAEAVPAALPASRSQEGGFLSQAEDCGLGLAPAPIKDAPLPEKEIPYPTEPARAGLPSGGPFHVRSPPAAPAVAPLTPASLGKAEPLTILSRNATHPLLHINTLYEAREEEDGGPRLPQDVGDLIAIPAPQQILIATFDEPRTVVSTVEF.

The Cytoplasmic portion of the chain corresponds to 11 to 47 (MATALLAGEKLRELILPGAQDDKAGALAALLLQLKLE). A helical membrane pass occupies residues 48-70 (LPFDRVVTIGTVLVPILLVTLVF). The Extracellular segment spans residues 71–123 (TKNFAEEPIYCYTPHNFTRDQALYARGYCWTELRDALPGVDASLWPSLFEHKF). Asn-86 is a glycosylation site (N-linked (GlcNAc...) asparagine). A helical transmembrane segment spans residues 124–146 (LPYALLAFAAIMYVPALGWEFLA). Residues 147-226 (STRLTSELNF…RGRSNFLAKL (80 aa)) lie on the Cytoplasmic side of the membrane. The chain crosses the membrane as a helical span at residues 227-249 (YLARHVLILLLSAVPISYLCTYY). Residues 250-292 (ATQKQNEFTCALGASPDGAAGAGPAVRVSCKLPSVQLQRIIAG) are Extracellular-facing. Residues 293 to 315 (VDIVLLCVMNLIILVNLIHLFIF) form a helical membrane-spanning segment. Residues 316–643 (RKSNFIFDKL…AREEEDGGPR (328 aa)) are Cytoplasmic-facing. Disordered regions lie at residues 393–423 (ATPTVRDSGVQTVDPSANPAEPDGAAEPPVV) and 454–510 (NSKA…KKHA). A compositionally biased stretch (pro residues) spans 492-504 (GPGPAPAPAPPPA). Position 593 is a phosphoserine (Ser-593).

This sequence belongs to the pannexin family. In terms of assembly, homoheptameric. S-palmitoylated in neural stem and progenitor cells. Post-translationally, cleaved by CASP3 and CASP7 during apoptosis. Cleavage has no effect on it function.

Its subcellular location is the cell membrane. The protein resides in the golgi apparatus membrane. It is found in the endoplasmic reticulum membrane. The enzyme catalyses ATP(in) = ATP(out). The catalysed reaction is chloride(in) = chloride(out). It carries out the reaction iodide(out) = iodide(in). It catalyses the reaction Na(+)(in) = Na(+)(out). The enzyme catalyses D-gluconate(in) = D-gluconate(out). Its function is as follows. Ion channel with a slight anion preference. Also able to release ATP. Plays a role in regulating neurogenesis and apoptosis in keratinocytes. The protein is Pannexin-2 of Homo sapiens (Human).